We begin with the raw amino-acid sequence, 589 residues long: Protein MICRORCHIDIA 3 (589 aa).

The tract at residues 1–33 (MAPESKNAGVSVVVNLDSDSDSDNDDGVGGRGA) is disordered. Residues 542-589 (MRCEEYVKKETELEQTVSNLAKELEETKSKCARLALLVDAKRREMQQV) adopt a coiled-coil conformation.

Belongs to the MORC ATPase protein family. As to quaternary structure, homodimer and heterodimer. Component of an RNA-directed DNA methylation (RdDM) complex. The cofactor is Mg(2+). It depends on Mn(2+) as a cofactor.

It localises to the nucleus. Functionally, exhibits ATPase activity. Binds DNA/RNA in a non-specific manner and exhibits endonuclease activity. Probably involved in DNA repair. Involved in RNA-directed DNA methylation (RdDM) as a component of the RdDM machinery and required for gene silencing. May also be involved in the regulation of chromatin architecture to maintain gene silencing. This chain is Protein MICRORCHIDIA 3, found in Arabidopsis thaliana (Mouse-ear cress).